A 79-amino-acid polypeptide reads, in one-letter code: Putative membrane protein insertion efficiency factor (79 aa).

This sequence belongs to the UPF0161 family.

The protein resides in the cell inner membrane. Its function is as follows. Could be involved in insertion of integral membrane proteins into the membrane. This Prochlorococcus marinus (strain NATL1A) protein is Putative membrane protein insertion efficiency factor.